Here is a 102-residue protein sequence, read N- to C-terminus: Thioredoxin (102 aa).

One can recognise a Thioredoxin domain in the interval 1-102 (MVQIVSQDNF…SLVKLISKHQ (102 aa)). Cys28 and Cys31 are joined by a disulfide.

This sequence belongs to the thioredoxin family.

Functionally, participates in various redox reactions through the reversible oxidation of its active center dithiol to a disulfide and catalyzes dithiol-disulfide exchange reactions. This Chlamydia muridarum (strain MoPn / Nigg) protein is Thioredoxin (trxA).